The chain runs to 380 residues: Ubiquitin-like protein 7 (380 aa).

A Ubiquitin-like domain is found at 18-98 (APKSILQLPE…VLRKSWPEPD (81 aa)). The segment at 200–313 (TPMPGADSSS…SSGVQSGTPI (114 aa)) is disordered. The segment covering 206 to 221 (DSSSRSMPSSSYRDMP) has biased composition (low complexity). At serine 230 the chain carries Phosphoserine. Low complexity-rich tracts occupy residues 239–253 (STRSTPSSSTPSSRP) and 270–293 (SELATALALASTPESSSHTPTPGT). Residues 294-313 (QGHSSGTSPMSSGVQSGTPI) show a composition bias toward polar residues. Positions 333–377 (SLQIQWQPQLQQLRDMGIQDDELSLRALQATGGDIQAALELIFAG) constitute a UBA domain.

As to quaternary structure, binds ubiquitin. Interacts with MAVS; this interaction enhances TRIM21-dependent 'Lys-27'-linked polyubiquitination of MAVS. Post-translationally, deubiquitinated by OTUD4 which stabilizes UBL7 expression.

Functionally, interferon-stimulated protein that positively regulates RNA virus-triggered innate immune signaling. Mechanistically, promotes 'Lys-27'-linked polyubiquitination of MAVS through TRIM21 leading to enhanced the IFN signaling pathway. The chain is Ubiquitin-like protein 7 (Ubl7) from Mus musculus (Mouse).